We begin with the raw amino-acid sequence, 437 residues long: Transcription factor ets-4 (437 aa).

The segment at 1–30 (MNGTGSVGHRWNSLSPEPHSGTESTASTPF) is disordered. Polar residues predominate over residues 21–30 (GTESTASTPF). Lys32 is covalently cross-linked (Glycyl lysine isopeptide (Lys-Gly) (interchain with G-Cter in SUMO)). Ser73 is modified (phosphoserine). Lys83 is covalently cross-linked (Glycyl lysine isopeptide (Lys-Gly) (interchain with G-Cter in SUMO)). One can recognise a PNT domain in the interval 120-202 (HLIQDISTTC…AQLQVWKTGT (83 aa)). The interval 275–302 (QGTVLPSPSNSDTSSNGSSQDMNDDDID) is disordered. The span at 280–293 (PSPSNSDTSSNGSS) shows a compositional bias: low complexity. Residues 349–432 (VHLWQFIREL…KKQRLVYKFL (84 aa)) constitute a DNA-binding region (ETS).

The protein belongs to the ETS family. As to quaternary structure, may interact with cebp-1. May interact with tdpt-1 to facilitate its sumoylation. Phosphorylation is required for axon regeneration. In terms of processing, sumoylated; sumoylation inhibits phosphorylation, which is required for probable interaction with cebp-1 and consequently the expression of svh-2. Expressed in cells of the anterior and posterior bulbs of the pharynx, seam cells, a few unidentified cells of the vulva, the hypodermis, several unidentified neurons, labial socket cells of the head and rectal cells.

It localises to the nucleus. Functionally, transcription factor which binds to 5'-GGAA/T-3' DNA consensus sequences. Both positively and negatively regulates the expression of target genes. Plays a role in the regulation of adult lifespan, which may in part be through modulation of daf-16 activity. Regulates the expression of genes such as svh-2 in response to axon injury and in addition, may function downstream of the cAMP signaling pathway to promote axon regeneration. Regulates the expression of lipid metabolism genes and may also control the expression of the RNA-binding protein rege-1 which too has been implicated in the control of fat accumulation. This chain is Transcription factor ets-4, found in Caenorhabditis elegans.